Consider the following 291-residue polypeptide: Probable prolyl 4-hydroxylase 12 (291 aa).

Residues 1–156 (MACLSRIFLI…GEEPSSVLHE (156 aa)) lie on the Cytoplasmic side of the membrane. The Fe2OG dioxygenase domain occupies 125–239 (NGGSIKVRSY…LLVATKLIYA (115 aa)). Residues lysine 142 and aspartate 144 each contribute to the Fe cation site. A helical; Signal-anchor for type II membrane protein membrane pass occupies residues 157–173 (SLLATVVLYLSNTTQGG). The Lumenal portion of the chain corresponds to 174–291 (ELLFPNSEMK…GTCRKSCNAC (118 aa)). Residue asparagine 211 is glycosylated (N-linked (GlcNAc...) asparagine). Histidine 220 provides a ligand contact to Fe cation. Positions 251–291 (CSDEDENCGRWAKLGECKKNPVYMIGSPDYYGTCRKSCNAC) constitute a ShKT domain. 3 cysteine pairs are disulfide-bonded: cysteine 251–cysteine 291, cysteine 258–cysteine 284, and cysteine 267–cysteine 288.

It belongs to the P4HA family. The cofactor is Fe(2+). L-ascorbate serves as cofactor.

Its subcellular location is the endoplasmic reticulum membrane. It carries out the reaction L-prolyl-[collagen] + 2-oxoglutarate + O2 = trans-4-hydroxy-L-prolyl-[collagen] + succinate + CO2. Catalyzes the post-translational formation of 4-hydroxyproline in -Xaa-Pro-Gly- sequences in proline-rich peptide sequences of plant glycoproteins and other proteins. Hydroxyprolines are important constituent of many plant cell wall glycoproteins such as extensins, hydroxyproline-rich glycoproteins, lectins and arabinogalactan proteins. The polypeptide is Probable prolyl 4-hydroxylase 12 (Arabidopsis thaliana (Mouse-ear cress)).